A 129-amino-acid polypeptide reads, in one-letter code: Acetophenone carboxylase beta subunit (129 aa).

In terms of assembly, acetophenone carboxylase consists of five subunits; a heterooctameric subcomplex of two alpha (Apc1), two beta (Apc2), two gamma (Apc3) and two delta (Apc4) subunits assembles with the epsilon (Apc5) subunit in an unknown stoichiometry. Requires Mg(2+) as cofactor. The cofactor is Mn(2+).

The protein localises to the cytoplasm. It catalyses the reaction acetophenone + hydrogencarbonate + 2 ATP + H2O = 3-oxo-3-phenylpropanoate + 2 ADP + 2 phosphate + 2 H(+). Its activity is regulated as follows. Inhibited by zinc ions, carbamoylphosphate and beta,gamma-imido-ATP. Catalyzes the carboxylation of acetophenone to form 3-oxo-3-phenylpropanoate (benzoylacetate) in the anaerobic catabolism of ethylbenzene. Also carboxylates propiophenone at the same rate and 4-acetyl-pyridine at lower rates. This is Acetophenone carboxylase beta subunit (apc2) from Aromatoleum aromaticum (strain DSM 19018 / LMG 30748 / EbN1) (Azoarcus sp. (strain EbN1)).